Reading from the N-terminus, the 466-residue chain is Uronate isomerase (466 aa).

The protein belongs to the metallo-dependent hydrolases superfamily. Uronate isomerase family.

The catalysed reaction is D-glucuronate = D-fructuronate. The enzyme catalyses aldehydo-D-galacturonate = keto-D-tagaturonate. It functions in the pathway carbohydrate metabolism; pentose and glucuronate interconversion. The chain is Uronate isomerase from Streptococcus agalactiae serotype III (strain NEM316).